Consider the following 621-residue polypeptide: Exonuclease 3'-5' domain-containing protein 2 (621 aa).

Residues 1-4 (MSRQ) lie on the Mitochondrial intermembrane side of the membrane. A helical membrane pass occupies residues 5–25 (NLVALTVTTLLGVAVGGFVLW). The Cytoplasmic segment spans residues 26–621 (KGIQRRRRSK…FGEDLPIQLS (596 aa)). Residues 34 to 68 (SKTSPVTQQPQQKVLGSRELPPPEDDQLHSSAPRS) form a disordered region. Polar residues predominate over residues 36-47 (TSPVTQQPQQKV). Residues Asp-108, Glu-110, and Asp-246 each contribute to the a divalent metal cation site. The 3'-5' exonuclease domain occupies 155-247 (ILADGTILKV…DQVIYAARDA (93 aa)). The segment at 299 to 343 (RLGEEVNGEATESQQKPRNKKSKMDGMVPGNHQGRDPRKHKRKPL) is disordered.

Belongs to the EXD2 family. Homodimer. Interacts with RBBP8, MRE11 and BRCA1. Mg(2+) is required as a cofactor. Requires Mn(2+) as cofactor.

The protein resides in the mitochondrion outer membrane. The protein localises to the mitochondrion matrix. It localises to the nucleus. It is found in the chromosome. The catalysed reaction is Exonucleolytic cleavage in the 3'- to 5'-direction to yield nucleoside 5'-phosphates.. Exonuclease that has both 3'-5' exoribonuclease and exodeoxyribonuclease activities, depending on the divalent metal cation used as cofactor. In presence of Mg(2+), only shows 3'-5' exoribonuclease activity, while it shows both exoribonuclease and exodeoxyribonuclease activities in presence of Mn(2+). Acts as an exoribonuclease in mitochondrion, possibly by regulating ATP production and mitochondrial translation. Also involved in the response to DNA damage. Acts as 3'-5' exodeoxyribonuclease for double-strand breaks resection and efficient homologous recombination. Plays a key role in controlling the initial steps of chromosomal break repair, it is recruited to chromatin in a damage-dependent manner and functionally interacts with the MRN complex to accelerate resection through its 3'-5' exonuclease activity, which efficiently processes double-stranded DNA substrates containing nicks. Also involved in response to replicative stress: recruited to stalled forks and is required to stabilize and restart stalled replication forks by restraining excessive fork regression, thereby suppressing their degradation. The polypeptide is Exonuclease 3'-5' domain-containing protein 2 (Homo sapiens (Human)).